The primary structure comprises 376 residues: CC-adding tRNA nucleotidyltransferase (376 aa).

26–29 (GAVR) is a CTP binding site. Mg(2+)-binding residues include Asp-39 and Asp-41. Residues 94–95 (RD), Asn-99, 136–145 (DPLRMLRAAR), and Arg-176 each bind CTP.

The protein belongs to the tRNA nucleotidyltransferase/poly(A) polymerase family. It depends on Mg(2+) as a cofactor.

It catalyses the reaction a tRNA precursor + 2 CTP = a tRNA with a 3' CC end + 2 diphosphate. Its function is as follows. tRNA nucleotidyltransferase involved in the synthesis of the tRNA CCA terminus. Adds the two cytidine residues to tRNA. This Shouchella clausii (strain KSM-K16) (Alkalihalobacillus clausii) protein is CC-adding tRNA nucleotidyltransferase.